We begin with the raw amino-acid sequence, 583 residues long: 2-succinyl-5-enolpyruvyl-6-hydroxy-3-cyclohexene-1-carboxylate synthase (583 aa).

It belongs to the TPP enzyme family. MenD subfamily. In terms of assembly, homodimer. Mg(2+) is required as a cofactor. Requires Mn(2+) as cofactor. It depends on thiamine diphosphate as a cofactor.

The catalysed reaction is isochorismate + 2-oxoglutarate + H(+) = 5-enolpyruvoyl-6-hydroxy-2-succinyl-cyclohex-3-ene-1-carboxylate + CO2. It functions in the pathway quinol/quinone metabolism; 1,4-dihydroxy-2-naphthoate biosynthesis; 1,4-dihydroxy-2-naphthoate from chorismate: step 2/7. The protein operates within cofactor biosynthesis; phylloquinone biosynthesis. Its function is as follows. Catalyzes the thiamine diphosphate-dependent decarboxylation of 2-oxoglutarate and the subsequent addition of the resulting succinic semialdehyde-thiamine pyrophosphate anion to isochorismate to yield 2-succinyl-5-enolpyruvyl-6-hydroxy-3-cyclohexene-1-carboxylate (SEPHCHC). This Trichormus variabilis (strain ATCC 29413 / PCC 7937) (Anabaena variabilis) protein is 2-succinyl-5-enolpyruvyl-6-hydroxy-3-cyclohexene-1-carboxylate synthase.